A 277-amino-acid chain; its full sequence is UPF0276 protein PSEEN3355 (277 aa).

Belongs to the UPF0276 family.

The sequence is that of UPF0276 protein PSEEN3355 from Pseudomonas entomophila (strain L48).